The sequence spans 51 residues: Insulin (51 aa).

Disulfide bonds link Cys-7–Cys-37, Cys-19–Cys-50, and Cys-36–Cys-41.

It belongs to the insulin family. As to quaternary structure, heterodimer of a B chain and an A chain linked by two disulfide bonds.

It is found in the secreted. In terms of biological role, insulin decreases blood glucose concentration. It increases cell permeability to monosaccharides, amino acids and fatty acids. It accelerates glycolysis, the pentose phosphate cycle, and glycogen synthesis in liver. The polypeptide is Insulin (INS) (Ptyas dhumnades (Big-eyed ratsnake)).